The sequence spans 108 residues: Phosphoribosyl-AMP cyclohydrolase (108 aa).

A Mg(2+)-binding site is contributed by aspartate 78. Zn(2+) is bound at residue cysteine 79. Mg(2+) is bound by residues aspartate 80 and aspartate 82. The Zn(2+) site is built by cysteine 95 and cysteine 102.

This sequence belongs to the PRA-CH family. Homodimer. Requires Mg(2+) as cofactor. It depends on Zn(2+) as a cofactor.

The protein resides in the cytoplasm. The catalysed reaction is 1-(5-phospho-beta-D-ribosyl)-5'-AMP + H2O = 1-(5-phospho-beta-D-ribosyl)-5-[(5-phospho-beta-D-ribosylamino)methylideneamino]imidazole-4-carboxamide. It functions in the pathway amino-acid biosynthesis; L-histidine biosynthesis; L-histidine from 5-phospho-alpha-D-ribose 1-diphosphate: step 3/9. Functionally, catalyzes the hydrolysis of the adenine ring of phosphoribosyl-AMP. The sequence is that of Phosphoribosyl-AMP cyclohydrolase from Cenarchaeum symbiosum (strain A).